Here is a 256-residue protein sequence, read N- to C-terminus: Type III pantothenate kinase (256 aa).

An ATP-binding site is contributed by 6–13 (DIGNTHTV). Substrate-binding positions include Tyr-100 and 107–110 (GADR). Asp-109 serves as the catalytic Proton acceptor. Asp-129 is a K(+) binding site. Thr-132 serves as a coordination point for ATP. Residue Thr-184 participates in substrate binding.

This sequence belongs to the type III pantothenate kinase family. Homodimer. The cofactor is NH4(+). K(+) serves as cofactor.

Its subcellular location is the cytoplasm. It catalyses the reaction (R)-pantothenate + ATP = (R)-4'-phosphopantothenate + ADP + H(+). Its pathway is cofactor biosynthesis; coenzyme A biosynthesis; CoA from (R)-pantothenate: step 1/5. Catalyzes the phosphorylation of pantothenate (Pan), the first step in CoA biosynthesis. The sequence is that of Type III pantothenate kinase from Acidothermus cellulolyticus (strain ATCC 43068 / DSM 8971 / 11B).